The sequence spans 210 residues: Redox-sensing transcriptional repressor Rex (210 aa).

Residues 17–56 (KYHRYLNELMKNDVDRISSKELGEKIGFTASQIRQDLNCF) constitute a DNA-binding region (H-T-H motif). 91–96 (GAGNIG) serves as a coordination point for NAD(+).

This sequence belongs to the transcriptional regulatory Rex family. Homodimer.

The protein localises to the cytoplasm. Functionally, modulates transcription in response to changes in cellular NADH/NAD(+) redox state. The sequence is that of Redox-sensing transcriptional repressor Rex from Clostridium botulinum (strain Eklund 17B / Type B).